A 352-amino-acid polypeptide reads, in one-letter code: Ion-translocating oxidoreductase complex subunit D (352 aa).

5 consecutive transmembrane segments (helical) span residues 20 to 40 (IMLLVLLAAIPGIATQLWFFG), 42 to 62 (GTLVQIILAVISALSAEALVL), 68 to 88 (PIAAILKDNSALLTGLLLAVS), 89 to 109 (IPPLAPWWMVVLGTVFAVIIA), and 123 to 143 (PAMIGYVVLLISFPVQMTNWL). Threonine 187 carries the post-translational modification FMN phosphoryl threonine. The next 5 helical transmembrane spans lie at 217 to 237 (GAGWQWVNLAWLAGGVWLLAI), 244 to 264 (IPVSFLVSLALCATLGWLFAP), 267 to 287 (LASPQIHMLSGATMLGAFFIL), 301 to 321 (LIFGALAGVLVWLIRSFGGYP), and 322 to 342 (DGVAFAVLLANITVPLIDYYT).

Belongs to the NqrB/RnfD family. In terms of assembly, the complex is composed of six subunits: RsxA, RsxB, RsxC, RsxD, RsxE and RsxG. FMN is required as a cofactor.

It is found in the cell inner membrane. Functionally, part of a membrane-bound complex that couples electron transfer with translocation of ions across the membrane. Required to maintain the reduced state of SoxR. This chain is Ion-translocating oxidoreductase complex subunit D, found in Escherichia fergusonii (strain ATCC 35469 / DSM 13698 / CCUG 18766 / IAM 14443 / JCM 21226 / LMG 7866 / NBRC 102419 / NCTC 12128 / CDC 0568-73).